Reading from the N-terminus, the 92-residue chain is Acylphosphatase (92 aa).

The Acylphosphatase-like domain occupies 5–92 (YIVAYVYGVV…TPFETFSIRY (88 aa)). Residues Arg-20 and Asn-38 contribute to the active site.

It belongs to the acylphosphatase family.

It carries out the reaction an acyl phosphate + H2O = a carboxylate + phosphate + H(+). This is Acylphosphatase (acyP) from Yersinia pseudotuberculosis serotype O:1b (strain IP 31758).